Reading from the N-terminus, the 901-residue chain is HTH-type transcriptional regulator MalT (901 aa).

An ATP-binding site is contributed by 39-46 (SPAGYGKT). An HTH luxR-type domain is found at 829–894 (ELIRTSPLTQ…AAVQHAQKLL (66 aa)). The segment at residues 853-872 (NEQIAGELEVAATTIKTHIR) is a DNA-binding region (H-T-H motif).

Belongs to the MalT family. As to quaternary structure, monomer in solution. Oligomerizes to an active state in the presence of the positive effectors ATP and maltotriose.

Activated by ATP and maltotriose, which are both required for DNA binding. Its function is as follows. Positively regulates the transcription of the maltose regulon whose gene products are responsible for uptake and catabolism of malto-oligosaccharides. Specifically binds to the promoter region of its target genes, recognizing a short DNA motif called the MalT box. The polypeptide is HTH-type transcriptional regulator MalT (Shigella boydii serotype 4 (strain Sb227)).